The following is an 84-amino-acid chain: Small ribosomal subunit protein uS17 (84 aa).

The protein belongs to the universal ribosomal protein uS17 family. Part of the 30S ribosomal subunit.

Its function is as follows. One of the primary rRNA binding proteins, it binds specifically to the 5'-end of 16S ribosomal RNA. This chain is Small ribosomal subunit protein uS17, found in Clostridium perfringens (strain ATCC 13124 / DSM 756 / JCM 1290 / NCIMB 6125 / NCTC 8237 / Type A).